A 408-amino-acid polypeptide reads, in one-letter code: S-adenosylmethionine synthase (408 aa).

His-19 lines the ATP pocket. Asp-21 is a Mg(2+) binding site. Glu-47 contacts K(+). The L-methionine site is built by Glu-60 and Gln-104. The segment at Gln-104–His-114 is flexible loop. Residues Asp-185–Lys-187, Arg-255–Phe-256, Asp-264, Arg-270–Lys-271, Ala-287, and Lys-291 each bind ATP. Asp-264 serves as a coordination point for L-methionine. Lys-295 contacts L-methionine.

It belongs to the AdoMet synthase family. Homotetramer; dimer of dimers. The cofactor is Mg(2+). K(+) is required as a cofactor.

The protein localises to the cytoplasm. It carries out the reaction L-methionine + ATP + H2O = S-adenosyl-L-methionine + phosphate + diphosphate. It functions in the pathway amino-acid biosynthesis; S-adenosyl-L-methionine biosynthesis; S-adenosyl-L-methionine from L-methionine: step 1/1. Functionally, catalyzes the formation of S-adenosylmethionine (AdoMet) from methionine and ATP. The overall synthetic reaction is composed of two sequential steps, AdoMet formation and the subsequent tripolyphosphate hydrolysis which occurs prior to release of AdoMet from the enzyme. The sequence is that of S-adenosylmethionine synthase from Deinococcus radiodurans (strain ATCC 13939 / DSM 20539 / JCM 16871 / CCUG 27074 / LMG 4051 / NBRC 15346 / NCIMB 9279 / VKM B-1422 / R1).